Here is a 310-residue protein sequence, read N- to C-terminus: Apolipoprotein E (310 aa).

A signal peptide spans 1 to 18 (MKVLWAALVVTLLAGCQA). Repeat copies occupy residues 77 to 98 (VLIE…QQLG), 99 to 120 (PMAQ…ARLG), 121 to 142 (ADME…AMMG), 143 to 164 (QSTE…KRLL), 165 to 186 (RDAE…EGAE), 187 to 204 (RSVN…EQAA), 205 to 226 (TVRS…QRLR), and 227 to 248 (GRLE…EQVQ). The tract at residues 77–248 (VLIEETMKEV…RLDEVREQVQ (172 aa)) is 8 X 22 AA approximate tandem repeats. The residue at position 140 (methionine 140) is a Methionine sulfoxide. Phosphoserine is present on serine 144. The interval 155–165 (HLRKLRKRLLR) is LDL and other lipoprotein receptors binding. Heparin is bound at residue 159–162 (LRKR). The segment at 203–283 (AATVRSLVSK…SWFEPLVQDM (81 aa)) is lipid-binding and lipoprotein association. 222–229 (GQRLRGRL) is a heparin binding site. Residues 259-310 (NQMRLQAEAFHARLKSWFEPLVQDMQQRWAELVEKVQLAVGTSPTSESSEKQ) are homooligomerization. The interval 271 to 283 (RLKSWFEPLVQDM) is specificity for association with VLDL.

It belongs to the apolipoprotein A1/A4/E family. Homotetramer. May interact with ABCA1; functionally associated with ABCA1 in the biogenesis of HDLs. May interact with APP/A4 amyloid-beta peptide; the interaction is extremely stable in vitro but its physiological significance is unclear. May interact with MAPT. May interact with MAP2. In the cerebrospinal fluid, interacts with secreted SORL1. Interacts with PMEL; this allows the loading of PMEL luminal fragment on ILVs to induce fibril nucleation. APOE exists as multiple glycosylated and sialylated glycoforms within cells and in plasma. The extent of glycosylation and sialylation are tissue and context specific. In terms of processing, glycated in plasma VLDL. Post-translationally, phosphorylated by FAM20C in the extracellular medium.

The protein resides in the secreted. It localises to the extracellular space. The protein localises to the extracellular matrix. It is found in the extracellular vesicle. Its subcellular location is the endosome. The protein resides in the multivesicular body. Its function is as follows. APOE is an apolipoprotein, a protein associating with lipid particles, that mainly functions in lipoprotein-mediated lipid transport between organs via the plasma and interstitial fluids. APOE is a core component of plasma lipoproteins and is involved in their production, conversion and clearance. Apolipoproteins are amphipathic molecules that interact both with lipids of the lipoprotein particle core and the aqueous environment of the plasma. As such, APOE associates with chylomicrons, chylomicron remnants, very low density lipoproteins (VLDL) and intermediate density lipoproteins (IDL) but shows a preferential binding to high-density lipoproteins (HDL). It also binds a wide range of cellular receptors including the LDL receptor/LDLR, the LDL receptor-related proteins LRP1, LRP2 and LRP8 and the very low-density lipoprotein receptor/VLDLR that mediate the cellular uptake of the APOE-containing lipoprotein particles. Finally, APOE also has a heparin-binding activity and binds heparan-sulfate proteoglycans on the surface of cells, a property that supports the capture and the receptor-mediated uptake of APOE-containing lipoproteins by cells. A main function of APOE is to mediate lipoprotein clearance through the uptake of chylomicrons, VLDLs, and HDLs by hepatocytes. APOE is also involved in the biosynthesis by the liver of VLDLs as well as their uptake by peripheral tissues ensuring the delivery of triglycerides and energy storage in muscle, heart and adipose tissues. By participating in the lipoprotein-mediated distribution of lipids among tissues, APOE plays a critical role in plasma and tissues lipid homeostasis. APOE is also involved in two steps of reverse cholesterol transport, the HDLs-mediated transport of cholesterol from peripheral tissues to the liver, and thereby plays an important role in cholesterol homeostasis. First, it is functionally associated with ABCA1 in the biogenesis of HDLs in tissues. Second, it is enriched in circulating HDLs and mediates their uptake by hepatocytes. APOE also plays an important role in lipid transport in the central nervous system, regulating neuron survival and sprouting. The protein is Apolipoprotein E (APOE) of Tapirus indicus (Asiatic tapir).